Consider the following 130-residue polypeptide: Histone H2A type 1 (130 aa).

Residues 1–22 (MSGRGKQGGKARAKAKTRSSRA) are disordered. Residue Ser-2 is modified to N-acetylserine. Residue Ser-2 is modified to Phosphoserine; by RPS6KA5. Arg-4 is subject to Citrulline; alternate. Symmetric dimethylarginine; by PRMT5; alternate is present on Arg-4. Lys-6 carries the post-translational modification N6-(2-hydroxyisobutyryl)lysine. The segment covering 7-19 (QGGKARAKAKTRS) has biased composition (basic residues). N6-(2-hydroxyisobutyryl)lysine; alternate is present on Lys-10. An N6-lactoyllysine; alternate modification is found at Lys-10. Position 10 is an N6-succinyllysine; alternate (Lys-10). Glycyl lysine isopeptide (Lys-Gly) (interchain with G-Cter in ubiquitin) cross-links involve residues Lys-14 and Lys-16. Position 37 is an N6-(2-hydroxyisobutyryl)lysine; alternate (Lys-37). An N6-(beta-hydroxybutyryl)lysine; alternate modification is found at Lys-37. Residue Lys-37 is modified to N6-crotonyllysine; alternate. N6-(2-hydroxyisobutyryl)lysine is present on residues Lys-75 and Lys-76. Lys-96 is modified (N6-(2-hydroxyisobutyryl)lysine; alternate). Lys-96 is subject to N6-succinyllysine; alternate. An N6-glutaryllysine; alternate modification is found at Lys-96. An N6-glutaryllysine modification is found at Lys-100. At Gln-105 the chain carries N5-methylglutamine. Lys-119 carries the post-translational modification N6-(2-hydroxyisobutyryl)lysine; alternate. An N6-crotonyllysine; alternate mark is found at Lys-119 and Lys-120. Lys-119 and Lys-120 each carry N6-glutaryllysine; alternate. Lys-120 participates in a covalent cross-link: Glycyl lysine isopeptide (Lys-Gly) (interchain with G-Cter in ubiquitin); alternate. Thr-121 carries the phosphothreonine; by DCAF1 modification. Lys-126 is modified (N6-crotonyllysine; alternate). At Lys-126 the chain carries N6-glutaryllysine; alternate.

This sequence belongs to the histone H2A family. The nucleosome is a histone octamer containing two molecules each of H2A, H2B, H3 and H4 assembled in one H3-H4 heterotetramer and two H2A-H2B heterodimers. The octamer wraps approximately 147 bp of DNA. Interacts with VRK1; the interaction is mediated by the nucleosome acidic patch, a cluster of negatively charged residues of H2A and H2B forming a cleft within the nucleosome core. Deiminated on Arg-4 in granulocytes upon calcium entry. Post-translationally, monoubiquitination of Lys-120 (H2AK119Ub) by RING1, TRIM37 and RNF2/RING2 complex gives a specific tag for epigenetic transcriptional repression and participates in X chromosome inactivation of female mammals. It is involved in the initiation of both imprinted and random X inactivation. Ubiquitinated H2A is enriched in inactive X chromosome chromatin. Ubiquitination of H2A functions downstream of methylation of 'Lys-27' of histone H3 (H3K27me). H2AK119Ub by RNF2/RING2 can also be induced by ultraviolet and may be involved in DNA repair. Following DNA double-strand breaks (DSBs), it is ubiquitinated through 'Lys-63' linkage of ubiquitin moieties by the E2 ligase UBE2N and the E3 ligases RNF8 and RNF168, leading to the recruitment of repair proteins to sites of DNA damage. Ubiquitination at Lys-14 and Lys-16 (H2AK13Ub and H2AK15Ub, respectively) in response to DNA damage is initiated by RNF168 that mediates monoubiquitination at these 2 sites, and 'Lys-63'-linked ubiquitin are then conjugated to monoubiquitin; RNF8 is able to extend 'Lys-63'-linked ubiquitin chains in vitro. H2AK119Ub and ionizing radiation-induced 'Lys-63'-linked ubiquitination (H2AK13Ub and H2AK15Ub) are distinct events. In terms of processing, phosphorylation on Ser-2 (H2AS1ph) is enhanced during mitosis. Phosphorylation on Ser-2 by RPS6KA5/MSK1 directly represses transcription. Acetylation of H3 inhibits Ser-2 phosphorylation by RPS6KA5/MSK1. Phosphorylation at Thr-121 (H2AT120ph) by DCAF1 is present in the regulatory region of many tumor suppresor genes and down-regulates their transcription. Symmetric dimethylation on Arg-4 by the PRDM1/PRMT5 complex may play a crucial role in the germ-cell lineage. Post-translationally, glutamine methylation at Gln-105 (H2AQ104me) by FBL is specifically dedicated to polymerase I. It is present at 35S ribosomal DNA locus and impairs binding of the FACT complex. In terms of processing, crotonylation (Kcr) is specifically present in male germ cells and marks testis-specific genes in post-meiotic cells, including X-linked genes that escape sex chromosome inactivation in haploid cells. Crotonylation marks active promoters and enhancers and confers resistance to transcriptional repressors. It is also associated with post-meiotically activated genes on autosomes. Lactylated in macrophages by EP300/P300 by using lactoyl-CoA directly derived from endogenous or exogenous lactate, leading to stimulates gene transcription.

The protein localises to the nucleus. It is found in the chromosome. Functionally, core component of nucleosome. Nucleosomes wrap and compact DNA into chromatin, limiting DNA accessibility to the cellular machineries which require DNA as a template. Histones thereby play a central role in transcription regulation, DNA repair, DNA replication and chromosomal stability. DNA accessibility is regulated via a complex set of post-translational modifications of histones, also called histone code, and nucleosome remodeling. The chain is Histone H2A type 1 from Bos taurus (Bovine).